We begin with the raw amino-acid sequence, 456 residues long: Cysteine--tRNA ligase (456 aa).

Cys28 is a binding site for Zn(2+). Residues 30–40 (ITVYDHCHLGH) carry the 'HIGH' region motif. Zn(2+)-binding residues include Cys209, His234, and Glu238. The 'KMSKS' region motif lies at 266–270 (KMAKS). Lys269 contributes to the ATP binding site.

It belongs to the class-I aminoacyl-tRNA synthetase family. In terms of assembly, monomer. The cofactor is Zn(2+).

It is found in the cytoplasm. The catalysed reaction is tRNA(Cys) + L-cysteine + ATP = L-cysteinyl-tRNA(Cys) + AMP + diphosphate. The chain is Cysteine--tRNA ligase from Legionella pneumophila (strain Paris).